Here is a 243-residue protein sequence, read N- to C-terminus: Fibroblast growth factor 12 (243 aa).

Disordered regions lie at residues 1–39 (MAAA…DGRS) and 216–243 (IGEK…QDST). The short motif at 11–38 (RQKRQARESNSDRVSASKRRSSPSKDGR) is the Bipartite nuclear localization signal element.

The protein belongs to the heparin-binding growth factors family. Interacts with the C-terminal region of SCN9A. As to expression, brain, eye and testis; highly expressed in embryonic retina, olfactory epithelium, olfactory bulb, and in a segmental pattern of the body wall; in adult olfactory bulb, less in cerebellum, deep cerebellar nuclei, cortex and multiple midbrain structures.

It is found in the nucleus. Involved in nervous system development and function. Involved in the positive regulation of voltage-gated sodium channel activity. Promotes neuronal excitability by elevating the voltage dependence of neuronal sodium channel SCN8A fast inactivation. The sequence is that of Fibroblast growth factor 12 (FGF12) from Homo sapiens (Human).